A 339-amino-acid polypeptide reads, in one-letter code: NADH-quinone oxidoreductase subunit H (339 aa).

8 helical membrane passes run 7–27, 77–97, 112–132, 149–169, 180–200, 235–255, 276–296, and 315–335; these read LFWI…AVAY, VLFV…WAVI, LLYI…AGWA, VVSY…AAGS, AGGI…VYWI, VFFL…AVMF, VPGV…YLWF, and VLIP…VTGF.

This sequence belongs to the complex I subunit 1 family. NDH-1 is composed of 14 different subunits. Subunits NuoA, H, J, K, L, M, N constitute the membrane sector of the complex.

The protein localises to the cell inner membrane. It catalyses the reaction a quinone + NADH + 5 H(+)(in) = a quinol + NAD(+) + 4 H(+)(out). Its function is as follows. NDH-1 shuttles electrons from NADH, via FMN and iron-sulfur (Fe-S) centers, to quinones in the respiratory chain. The immediate electron acceptor for the enzyme in this species is believed to be ubiquinone. Couples the redox reaction to proton translocation (for every two electrons transferred, four hydrogen ions are translocated across the cytoplasmic membrane), and thus conserves the redox energy in a proton gradient. This subunit may bind ubiquinone. The protein is NADH-quinone oxidoreductase subunit H of Alkalilimnicola ehrlichii (strain ATCC BAA-1101 / DSM 17681 / MLHE-1).